The sequence spans 304 residues: Protoheme IX farnesyltransferase (304 aa).

9 helical membrane passes run 31–51 (VNTL…PDGL), 58–78 (VAAT…NCLI), 99–119 (LAPA…LTVL), 126–146 (LTMW…TVLL), 154–174 (IVIG…AVTG), 180–200 (ALLL…ALAL), 222–242 (FTRL…LLPF), 243–263 (ATRM…IGFL), and 284–304 (FSIL…YLPL).

The protein belongs to the UbiA prenyltransferase family. Protoheme IX farnesyltransferase subfamily.

The protein resides in the cell inner membrane. The enzyme catalyses heme b + (2E,6E)-farnesyl diphosphate + H2O = Fe(II)-heme o + diphosphate. Its pathway is porphyrin-containing compound metabolism; heme O biosynthesis; heme O from protoheme: step 1/1. In terms of biological role, converts heme B (protoheme IX) to heme O by substitution of the vinyl group on carbon 2 of heme B porphyrin ring with a hydroxyethyl farnesyl side group. In Aromatoleum aromaticum (strain DSM 19018 / LMG 30748 / EbN1) (Azoarcus sp. (strain EbN1)), this protein is Protoheme IX farnesyltransferase.